A 196-amino-acid chain; its full sequence is Carnitine operon protein CaiE (196 aa).

The interval 176-196 (LRQMEENRPRLQGTTDVAPKR) is disordered.

This sequence belongs to the transferase hexapeptide repeat family.

The protein operates within amine and polyamine metabolism; carnitine metabolism. Functionally, overproduction of CaiE stimulates the activity of CaiB and CaiD. This Escherichia fergusonii (strain ATCC 35469 / DSM 13698 / CCUG 18766 / IAM 14443 / JCM 21226 / LMG 7866 / NBRC 102419 / NCTC 12128 / CDC 0568-73) protein is Carnitine operon protein CaiE.